We begin with the raw amino-acid sequence, 404 residues long: 26S proteasome regulatory subunit 6A-B (404 aa).

192-199 (GPPGTGKT) contacts ATP.

Belongs to the AAA ATPase family. As to quaternary structure, may form a heterodimer with a related family member.

The protein localises to the cytoplasm. The protein resides in the nucleus. Functionally, the 26S proteasome is involved in the ATP-dependent degradation of ubiquitinated proteins. The regulatory (or ATPase) complex confers ATP dependency and substrate specificity to the 26S complex. In Xenopus laevis (African clawed frog), this protein is 26S proteasome regulatory subunit 6A-B (psmc3-b).